We begin with the raw amino-acid sequence, 161 residues long: Eukaryotic translation initiation factor 5A-1 (161 aa).

K54 carries the post-translational modification Hypusine.

Belongs to the eIF-5A family. Lys-54 undergoes hypusination, a unique post-translational modification that consists in the addition of a butylamino group from spermidine to lysine side chain, leading to the formation of the unusual amino acid hypusine. eIF-5As are the only known proteins to undergo this modification, which is essential for their function. Expressed specifically in the germline in the distal region of gonads where germ cells actively proliferate.

The protein localises to the cytoplasm. Translation factor that promotes translation elongation and termination, particularly upon ribosome stalling at specific amino acid sequence contexts. Binds between the exit (E) and peptidyl (P) site of the ribosome and promotes rescue of stalled ribosome: specifically required for efficient translation of polyproline-containing peptides as well as other motifs that stall the ribosome. Acts as a ribosome quality control (RQC) cofactor by joining the RQC complex to facilitate peptidyl transfer during CAT tailing step. Required for mitotic germ cell proliferation, gametogenesis after entry into meiosis, and localization of the P granule component pgl-1 on P granules. This Caenorhabditis elegans protein is Eukaryotic translation initiation factor 5A-1 (iff-1).